Consider the following 152-residue polypeptide: Small integral membrane protein 28 (152 aa).

A helical membrane pass occupies residues Phe-52–Leu-72. Positions Pro-117–Val-152 are disordered.

Its subcellular location is the membrane. This is Small integral membrane protein 28 from Homo sapiens (Human).